The primary structure comprises 30 residues: Uperin-6.1 (30 aa).

As to expression, expressed by the skin dorsal glands.

The protein localises to the secreted. This is Uperin-6.1 from Uperoleia inundata (Floodplain toadlet).